Consider the following 253-residue polypeptide: Indole-3-glycerol phosphate synthase (253 aa).

This sequence belongs to the TrpC family.

It carries out the reaction 1-(2-carboxyphenylamino)-1-deoxy-D-ribulose 5-phosphate + H(+) = (1S,2R)-1-C-(indol-3-yl)glycerol 3-phosphate + CO2 + H2O. The protein operates within amino-acid biosynthesis; L-tryptophan biosynthesis; L-tryptophan from chorismate: step 4/5. The polypeptide is Indole-3-glycerol phosphate synthase (Bacillus cereus (strain ATCC 14579 / DSM 31 / CCUG 7414 / JCM 2152 / NBRC 15305 / NCIMB 9373 / NCTC 2599 / NRRL B-3711)).